Reading from the N-terminus, the 450-residue chain is Na(+)/H(+) antiporter NhaA 2 (450 aa).

Transmembrane regions (helical) follow at residues 43–63 (VGGAVLLVASAVALVWANSPW), 86–106 (LTLGTWAADGLLAVFFLVVGL), 124–144 (ALPMAAAVGGMVVPALIFVAV), 155–175 (GWAIPTATDIAFAVAVLAVIS), 185–205 (FLLTLAVVDDLLAVTVIAVFY), 208–228 (EINLTALGLSIVPLALFALCV), 234–254 (SWWLLLPLGVATWVLMHESGV), 258–278 (VAGVLLGFTVPVLRSVAAGGP), 299–319 (VAVPVFAFFAAGVAIGGVSGL), 326–346 (PITLGIILGLVVGKPVGIFLT), 364–384 (WIDVFGVALLAGIGFTVSLLI), and 398–418 (FVKVGVLTGSLVAALIAAVLL).

It belongs to the NhaA Na(+)/H(+) (TC 2.A.33) antiporter family.

Its subcellular location is the cell membrane. The catalysed reaction is Na(+)(in) + 2 H(+)(out) = Na(+)(out) + 2 H(+)(in). In terms of biological role, na(+)/H(+) antiporter that extrudes sodium in exchange for external protons. The chain is Na(+)/H(+) antiporter NhaA 2 from Mycobacterium sp. (strain KMS).